Reading from the N-terminus, the 327-residue chain is ATP-dependent 6-phosphofructokinase (327 aa).

ATP contacts are provided by residues Gly-12, 73–74, and 103–106; these read RL and GDGS. Asp-104 contacts Mg(2+). 126 to 128 serves as a coordination point for substrate; sequence TID. Asp-128 acts as the Proton acceptor in catalysis. Arg-155 contributes to the ADP binding site. Substrate is bound by residues Arg-163 and 170–172; that span reads MGH. Residues 186–188 and 214–216 each bind ADP; these read GAD and KRS. Residues Glu-223, Arg-245, and 251 to 254 each bind substrate; that span reads HTQR.

Belongs to the phosphofructokinase type A (PFKA) family. ATP-dependent PFK group I subfamily. Prokaryotic clade 'B1' sub-subfamily. As to quaternary structure, homotetramer. Requires Mg(2+) as cofactor.

It localises to the cytoplasm. The catalysed reaction is beta-D-fructose 6-phosphate + ATP = beta-D-fructose 1,6-bisphosphate + ADP + H(+). It functions in the pathway carbohydrate degradation; glycolysis; D-glyceraldehyde 3-phosphate and glycerone phosphate from D-glucose: step 3/4. With respect to regulation, allosterically activated by ADP and other diphosphonucleosides, and allosterically inhibited by phosphoenolpyruvate. Catalyzes the phosphorylation of D-fructose 6-phosphate to fructose 1,6-bisphosphate by ATP, the first committing step of glycolysis. The sequence is that of ATP-dependent 6-phosphofructokinase from Spiroplasma citri.